Reading from the N-terminus, the 178-residue chain is Large ribosomal subunit protein bL17 (178 aa).

2 stretches are compositionally biased toward low complexity: residues 123–139 and 151–160; these read KAPASAADAKAQINTAT and EDAAAQAPVA. The tract at residues 123-178 is disordered; sequence KAPASAADAKAQINTATEAKEAEPEAPAEDAAAQAPVADEQKAAEVDEKAEEKPEA. Residues 161-178 show a composition bias toward basic and acidic residues; it reads DEQKAAEVDEKAEEKPEA.

Belongs to the bacterial ribosomal protein bL17 family. In terms of assembly, part of the 50S ribosomal subunit. Contacts protein L32.

The polypeptide is Large ribosomal subunit protein bL17 (Cutibacterium acnes (strain DSM 16379 / KPA171202) (Propionibacterium acnes)).